The chain runs to 533 residues: MAMTLLPRHGKTHLANIPYGYYTATVSLIFIILLIGARKLIPVRQRNRSKWAKWALSSARGGSPLLYLVVLFVALLVPFVHHYSLLGYVGLYLKRLGRLSYVLATLNLFLTLRPNFLLPGYVYLDLIPLHKWLSRSLCLLALVHGVGFLVKWALDSQVSFVAKAFYNIPNLAGLVVGALMAFMVLLSVRPVRRFSYRSFYLTHIIGAWVFVFLTAYHARPGVFVPYTLLNAGLFVFYILSKTVPARGVELVSKSTDDVNNCLTRIVLPRKAMPEHFAPGSHLRISPYRRVNPLYYMLPSHPYTVASMPEDKDVELIVREHASGFHLLTGLGYTIQNHYESVPRQCLQSATRIALVCGGSGLSYALPIFRHFASEEKADQVKYLRLIWLVRDKYDVNVLGNIRSLASSVAQFDIFVTRSVPPDDTVESGSKLSPAQQQSPITDDLEFELESFGDQLDQNGALITPEIPNLPSGLASSFHFGRKLDWMTDLAQFVEREDLGSTWLVACGPKGLNDAAKLYAQQNEINLASETYAL.

A run of 7 helical transmembrane segments spans residues 17-37, 61-81, 102-122, 136-156, 168-188, 198-218, and 220-240; these read IPYG…LIGA, GGSP…PFVH, VLAT…PGYV, SLCL…ALDS, IPNL…LLSV, SFYL…AYHA, and PGVF…YILS. Positions 96 to 213 constitute a Ferric oxidoreductase domain; sequence LGRLSYVLAT…IIGAWVFVFL (118 aa). Residues 240–366 enclose the FAD-binding FR-type domain; the sequence is SKTVPARGVE…GGSGLSYALP (127 aa).

The protein belongs to the ferric reductase (FRE) family. AIM14 subfamily.

The protein localises to the membrane. Its function is as follows. Probable cell surface metalloreductase. May be involved in iron or copper homeostasis. The chain is Probable metalloreductase AIM14 (AIM14) from Lachancea thermotolerans (strain ATCC 56472 / CBS 6340 / NRRL Y-8284) (Yeast).